The sequence spans 722 residues: NCK-interacting protein with SH3 domain (722 aa).

The 58-residue stretch at 1 to 58 (MYRALYAFRSAEPNALAFAAGETFLVLERSSAHWWLAARARSGETGYVPPAYLRRLQG) folds into the SH3 domain. Disordered stretches follow at residues 101–122 (KETL…SSTS) and 149–286 (PSSE…ASDD). The span at 110–121 (SASSVAVMTSST) shows a compositional bias: low complexity. Residue serine 120 is modified to Phosphoserine. Residues 169–185 (QIPPQPRRAAPTTPPPP) are compositionally biased toward pro residues. The Nuclear localization signal signature appears at 175 to 192 (RRAAPTTPPPPVKRRDRE). Position 181 is a phosphothreonine (threonine 181). Residues 206 to 240 (PSGGNSVSSGSSVSSTSLDTLYTSSSPSEPGSSCS) are compositionally biased toward low complexity. Serine 294 bears the Phosphoserine mark.

Associates with the intermediate filaments, vimentin and desmin. Binds the first and third SH3 domains of NCK. Binds the proline-rich domains of N-WASP through its SH3 domain. Similarly, binds diaphanous protein homolog 1 (DRF1). Binds the SH3 domains of GRB2 through its proline-rich domains. Interacts with Helicobacter pylori toxin vacA. Isoform 4 interacts with FHOD1. Interacts with FASLG. Interacts with TMIGD2. As to expression, highest expression in heart, brain, skeletal muscle, kidney and liver. Lower levels in placenta, lung, small intestine and leukocytes. Weak expression in colon, thymus and spleen.

Its subcellular location is the nucleus. Has an important role in stress fiber formation induced by active diaphanous protein homolog 1 (DRF1). Induces microspike formation, in vivo. In vitro, stimulates N-WASP-induced ARP2/3 complex activation in the absence of CDC42. May play an important role in the maintenance of sarcomeres and/or in the assembly of myofibrils into sarcomeres. Implicated in regulation of actin polymerization and cell adhesion. Plays a role in angiogenesis. The polypeptide is NCK-interacting protein with SH3 domain (NCKIPSD) (Homo sapiens (Human)).